Here is a 574-residue protein sequence, read N- to C-terminus: Interleukin-22 receptor subunit alpha-1 (574 aa).

Residues 1–15 (MRTLLTILTVGSLAA) form the signal peptide. The Extracellular portion of the chain corresponds to 16–228 (HAPEDPSDLL…VKTLPDRTWT (213 aa)). 2 Fibronectin type-III domains span residues 17–124 (APED…LKPP) and 141–221 (PTPT…RVKT). Cysteines 71 and 79 form a disulfide. N-linked (GlcNAc...) asparagine glycosylation is found at asparagine 80 and asparagine 172. The cysteines at positions 128 and 217 are disulfide-linked. Residues 229–249 (YSFSGAFLFSMGFLVAVLCYL) traverse the membrane as a helical segment. The Cytoplasmic segment spans residues 250-574 (SYRYVTKPPA…GLALTVQWES (325 aa)). 3 disordered regions span residues 388 to 440 (SSYA…AGSC), 454 to 489 (AMEE…EGTP), and 507 to 560 (HPMS…TELD). Residues serine 410 and serine 414 each carry the phosphoserine modification.

The protein belongs to the type II cytokine receptor family. Heterodimer with IL10RB and with IL20RB. IL22 binding to heterodimer is greater than binding to IL22RA1 alone. Interacts with FBXW12; the interaction promotes ubiquitination of IL22RA1. Post-translationally, ubiquitinated. As to expression, expressed in colon, liver, lung, pancreas and kidney. No expression in immune cells such as monocytes, T-cells, and NK-cells. Expressed in keratinocytes of normal skin as well as in psoriatic skin lesion. Detected in normal blood brain barrier endothelial cells as well as in multiple sclerosis lesions; Strongly expressed on central nervous system vessels within infiltrated multiple sclerosis lesions. Overexpressed in synovial fluid cells from rheumatoid arthritis and spondyloarthropathy patients.

The protein localises to the cell membrane. Its function is as follows. Component of the receptor for IL20, IL22 and IL24. Component of IL22 receptor formed by IL22RA1 and IL10RB enabling IL22 signaling via JAK/STAT pathways. IL22 also induces activation of MAPK1/MAPK3 and Akt kinases pathways. Component of one of the receptor for IL20 and IL24 formed by IL22RA1 and IL20RB also signaling through STATs activation. Mediates IL24 antiangiogenic activity as well as IL24 inhibitory effect on endothelial cell tube formation and differentiation. This is Interleukin-22 receptor subunit alpha-1 (IL22RA1) from Homo sapiens (Human).